The sequence spans 370 residues: sn-glycerol-3-phosphate import ATP-binding protein UgpC (370 aa).

Residues leucine 4–methionine 236 enclose the ABC transporter domain. Residue glycine 38–serine 45 coordinates ATP.

This sequence belongs to the ABC transporter superfamily. sn-glycerol-3-phosphate importer (TC 3.A.1.1.3) family. As to quaternary structure, the complex is composed of two ATP-binding proteins (UgpC), two transmembrane proteins (UgpA and UgpE) and a solute-binding protein (UgpB).

The protein localises to the cell inner membrane. The enzyme catalyses sn-glycerol 3-phosphate(out) + ATP + H2O = sn-glycerol 3-phosphate(in) + ADP + phosphate + H(+). Part of the ABC transporter complex UgpBAEC involved in sn-glycerol-3-phosphate (G3P) import. Responsible for energy coupling to the transport system. This Chromobacterium violaceum (strain ATCC 12472 / DSM 30191 / JCM 1249 / CCUG 213 / NBRC 12614 / NCIMB 9131 / NCTC 9757 / MK) protein is sn-glycerol-3-phosphate import ATP-binding protein UgpC.